The primary structure comprises 143 residues: Larval cuticle protein LCP-17 (143 aa).

The N-terminal stretch at 1 to 16 (MKFLIVLAVAVACASA) is a signal peptide. The 70-residue stretch at 41-110 (EGHFQFNYET…PQGSHLPTPH (70 aa)) folds into the Chitin-binding type R&amp;R domain.

Component of the cuticle of the larva of Bombyx mori. The protein is Larval cuticle protein LCP-17 (LCP17) of Bombyx mori (Silk moth).